The chain runs to 287 residues: Protease HtpX (287 aa).

The next 2 membrane-spanning stretches (helical) occupy residues 4 to 24 (IFLL…VMSI) and 33 to 53 (GGLL…SLAI). His-139 provides a ligand contact to Zn(2+). The active site involves Glu-140. His-143 provides a ligand contact to Zn(2+). 2 consecutive transmembrane segments (helical) span residues 154–174 (LIQG…ASII) and 195–215 (AVVF…VAYF). Glu-220 provides a ligand contact to Zn(2+).

Belongs to the peptidase M48B family. Zn(2+) is required as a cofactor.

It localises to the cell inner membrane. This chain is Protease HtpX, found in Shewanella loihica (strain ATCC BAA-1088 / PV-4).